Consider the following 730-residue polypeptide: Wall-associated receptor kinase-like 1 (730 aa).

A signal peptide spans 1-25 (MKTKTSIFQFIVASVLTLLINDSSA). Topologically, residues 26–358 (ATPPPPISNS…KPTKPPVLQG (333 aa)) are extracellular. Asn34, Asn40, Asn70, Asn77, Asn92, Asn119, Asn132, Asn211, Asn233, Asn269, and Asn281 each carry an N-linked (GlcNAc...) asparagine glycan. Residues 282–341 (CSCEYDYFSGMSYRNCYCDYGYTGNPYLRGGCVDTDSCEGNHNCGEDAHCVNMPGPMSMC) are atypical EGF-like. 3 disulfides stabilise this stretch: Cys284-Cys297, Cys319-Cys331, and Cys325-Cys341. A helical membrane pass occupies residues 359–379 (ILIGLSGLVFFVGLFWLFKLI). Over 380 to 730 (KKRRNINRSK…DQPMAINNKR (351 aa)) the chain is Cytoplasmic. The Protein kinase domain maps to 429–702 (FSIDRVLGQG…KEVSNELERI (274 aa)). ATP contacts are provided by residues 435–443 (LGQGGQGTV) and Lys457. The residue at position 502 (Tyr502) is a Phosphotyrosine. The active-site Proton acceptor is the Asp554. Thr588 and Thr593 each carry phosphothreonine. Tyr601 bears the Phosphotyrosine mark. The tract at residues 685 to 730 (KGKNRPNMKEVSNELERIRSSPEDLDVRTENEDEEEDQPMAINNKR) is disordered. Over residues 691–714 (NMKEVSNELERIRSSPEDLDVRTE) the composition is skewed to basic and acidic residues.

This sequence belongs to the protein kinase superfamily. Ser/Thr protein kinase family. In terms of tissue distribution, preferentially expressed in roots and flowers.

The protein resides in the membrane. The enzyme catalyses L-seryl-[protein] + ATP = O-phospho-L-seryl-[protein] + ADP + H(+). The catalysed reaction is L-threonyl-[protein] + ATP = O-phospho-L-threonyl-[protein] + ADP + H(+). Serine/threonine-protein kinase that may function as a signaling receptor of extracellular matrix component. This is Wall-associated receptor kinase-like 1 (WAKL1) from Arabidopsis thaliana (Mouse-ear cress).